The sequence spans 314 residues: Methionyl-tRNA formyltransferase (314 aa).

Residue 113–116 coordinates (6S)-5,6,7,8-tetrahydrofolate; sequence SLLP.

It belongs to the Fmt family.

The enzyme catalyses L-methionyl-tRNA(fMet) + (6R)-10-formyltetrahydrofolate = N-formyl-L-methionyl-tRNA(fMet) + (6S)-5,6,7,8-tetrahydrofolate + H(+). Functionally, attaches a formyl group to the free amino group of methionyl-tRNA(fMet). The formyl group appears to play a dual role in the initiator identity of N-formylmethionyl-tRNA by promoting its recognition by IF2 and preventing the misappropriation of this tRNA by the elongation apparatus. The chain is Methionyl-tRNA formyltransferase from Stutzerimonas stutzeri (strain A1501) (Pseudomonas stutzeri).